Reading from the N-terminus, the 383-residue chain is Acetylornithine deacetylase (383 aa).

H80 is a Zn(2+) binding site. Residue D82 is part of the active site. D112 contributes to the Zn(2+) binding site. E144 is a catalytic residue. Zn(2+) contacts are provided by E145, E169, and H355.

Belongs to the peptidase M20A family. ArgE subfamily. In terms of assembly, homodimer. The cofactor is Zn(2+). Requires Co(2+) as cofactor. Glutathione serves as cofactor.

The protein localises to the cytoplasm. It catalyses the reaction N(2)-acetyl-L-ornithine + H2O = L-ornithine + acetate. It participates in amino-acid biosynthesis; L-arginine biosynthesis; L-ornithine from N(2)-acetyl-L-ornithine (linear): step 1/1. Catalyzes the hydrolysis of the amide bond of N(2)-acetylated L-amino acids. Cleaves the acetyl group from N-acetyl-L-ornithine to form L-ornithine, an intermediate in L-arginine biosynthesis pathway, and a branchpoint in the synthesis of polyamines. The sequence is that of Acetylornithine deacetylase from Salmonella choleraesuis (strain SC-B67).